A 441-amino-acid chain; its full sequence is GTPase Der (441 aa).

EngA-type G domains follow at residues 3-167 (PLIA…PKGS) and 176-351 (TKIA…EQFA). GTP is bound by residues 9–16 (GRPNVGKS), 56–60 (DTGGF), 119–122 (NKID), 182–189 (GRPNVGKS), 229–233 (DTAGI), and 294–297 (NKWD). Positions 352–436 (RRITTSDLNR…PMRLLFKGRE (85 aa)) constitute a KH-like domain.

It belongs to the TRAFAC class TrmE-Era-EngA-EngB-Septin-like GTPase superfamily. EngA (Der) GTPase family. Associates with the 50S ribosomal subunit.

Functionally, GTPase that plays an essential role in the late steps of ribosome biogenesis. The sequence is that of GTPase Der from Geotalea uraniireducens (strain Rf4) (Geobacter uraniireducens).